We begin with the raw amino-acid sequence, 521 residues long: Protein nucleotidyltransferase YdiU (521 aa).

The ATP site is built by Gly109, Gly111, Arg112, Lys131, Asp143, Gly144, Arg194, and Arg201. Asp270 (proton acceptor) is an active-site residue. Residues Asn271 and Asp280 each contribute to the Mg(2+) site. Asp280 provides a ligand contact to ATP.

The protein belongs to the SELO family. Mg(2+) is required as a cofactor. It depends on Mn(2+) as a cofactor.

The catalysed reaction is L-seryl-[protein] + ATP = 3-O-(5'-adenylyl)-L-seryl-[protein] + diphosphate. It carries out the reaction L-threonyl-[protein] + ATP = 3-O-(5'-adenylyl)-L-threonyl-[protein] + diphosphate. The enzyme catalyses L-tyrosyl-[protein] + ATP = O-(5'-adenylyl)-L-tyrosyl-[protein] + diphosphate. It catalyses the reaction L-histidyl-[protein] + UTP = N(tele)-(5'-uridylyl)-L-histidyl-[protein] + diphosphate. The catalysed reaction is L-seryl-[protein] + UTP = O-(5'-uridylyl)-L-seryl-[protein] + diphosphate. It carries out the reaction L-tyrosyl-[protein] + UTP = O-(5'-uridylyl)-L-tyrosyl-[protein] + diphosphate. Nucleotidyltransferase involved in the post-translational modification of proteins. It can catalyze the addition of adenosine monophosphate (AMP) or uridine monophosphate (UMP) to a protein, resulting in modifications known as AMPylation and UMPylation. This is Protein nucleotidyltransferase YdiU from Burkholderia pseudomallei (strain 1106a).